The chain runs to 293 residues: Glutamyl-Q tRNA(Asp) synthetase (293 aa).

L-glutamate is bound by residues 26-30 (RYAPS) and Asp-62. The 'HIGH' region motif lies at 29–39 (PSPTGALHLGN). Zn(2+)-binding residues include Cys-118, Cys-120, Tyr-131, and Cys-135. Positions 178 and 196 each coordinate L-glutamate. The 'KMSKS' region signature appears at 234 to 238 (KLSKR). Lys-237 is a binding site for ATP.

It belongs to the class-I aminoacyl-tRNA synthetase family. GluQ subfamily. Zn(2+) serves as cofactor.

Its function is as follows. Catalyzes the tRNA-independent activation of glutamate in presence of ATP and the subsequent transfer of glutamate onto a tRNA(Asp). Glutamate is transferred on the 2-amino-5-(4,5-dihydroxy-2-cyclopenten-1-yl) moiety of the queuosine in the wobble position of the QUC anticodon. In Parasynechococcus marenigrum (strain WH8102), this protein is Glutamyl-Q tRNA(Asp) synthetase.